A 257-amino-acid chain; its full sequence is Zinc transporter ZupT (257 aa).

The next 8 membrane-spanning stretches (helical) occupy residues 5 to 25, 32 to 52, 61 to 81, 109 to 129, 137 to 157, 171 to 191, 195 to 215, and 236 to 256; these read LILT…GVLG, VLAF…LMEM, GMSP…YFGL, AILL…ATFV, LGFG…LAVA, IFWA…AWLI, LVSP…MVAL, and GVLC…TIGI. Fe(2+) is bound by residues asparagine 120 and glutamate 123. Zn(2+) contacts are provided by glutamate 123 and histidine 148. Fe(2+)-binding residues include asparagine 149, glutamate 152, and glutamate 181. Glutamate 152 contacts Zn(2+).

Belongs to the ZIP transporter (TC 2.A.5) family. ZupT subfamily.

The protein localises to the cell inner membrane. It carries out the reaction Zn(2+)(in) = Zn(2+)(out). Its function is as follows. Mediates zinc uptake. May also transport other divalent cations. In Salmonella agona (strain SL483), this protein is Zinc transporter ZupT.